We begin with the raw amino-acid sequence, 483 residues long: Regulatory protein ViaA (483 aa).

This sequence belongs to the ViaA family. Homodimer. Interacts with RavA.

Its subcellular location is the cytoplasm. Component of the RavA-ViaA chaperone complex, which may act on the membrane to optimize the function of some of the respiratory chains. ViaA stimulates the ATPase activity of RavA. The chain is Regulatory protein ViaA from Salmonella paratyphi A (strain ATCC 9150 / SARB42).